The primary structure comprises 581 residues: Arginine--tRNA ligase (581 aa).

Positions 122-132 match the 'HIGH' region motif; that stretch reads PNVAKPMHVGH.

Belongs to the class-I aminoacyl-tRNA synthetase family. As to quaternary structure, monomer.

The protein resides in the cytoplasm. The enzyme catalyses tRNA(Arg) + L-arginine + ATP = L-arginyl-tRNA(Arg) + AMP + diphosphate. The polypeptide is Arginine--tRNA ligase (Francisella tularensis subsp. tularensis (strain WY96-3418)).